A 176-amino-acid polypeptide reads, in one-letter code: Ribosome maturation factor RimM (176 aa).

The region spanning 100–173 is the PRC barrel domain; the sequence is PGEFHLLDLL…WLMVCPPPGL (74 aa).

This sequence belongs to the RimM family. Binds ribosomal protein uS19.

It is found in the cytoplasm. Functionally, an accessory protein needed during the final step in the assembly of 30S ribosomal subunit, possibly for assembly of the head region. Essential for efficient processing of 16S rRNA. May be needed both before and after RbfA during the maturation of 16S rRNA. It has affinity for free ribosomal 30S subunits but not for 70S ribosomes. This Prochlorococcus marinus (strain SARG / CCMP1375 / SS120) protein is Ribosome maturation factor RimM.